We begin with the raw amino-acid sequence, 140 residues long: Endoribonuclease YbeY (140 aa).

Zn(2+)-binding residues include histidine 100, histidine 104, and histidine 110.

The protein belongs to the endoribonuclease YbeY family. Zn(2+) serves as cofactor.

It localises to the cytoplasm. Functionally, single strand-specific metallo-endoribonuclease involved in late-stage 70S ribosome quality control and in maturation of the 3' terminus of the 16S rRNA. The chain is Endoribonuclease YbeY from Helicobacter pylori (strain Shi470).